The following is a 622-amino-acid chain: 1-deoxy-D-xylulose-5-phosphate synthase (622 aa).

Thiamine diphosphate is bound by residues His-74 and 115-117 (GHS). Asp-146 provides a ligand contact to Mg(2+). Thiamine diphosphate-binding positions include 147–148 (GA), Asn-177, Phe-285, and Glu-366. A Mg(2+)-binding site is contributed by Asn-177.

The protein belongs to the transketolase family. DXPS subfamily. In terms of assembly, homodimer. Mg(2+) is required as a cofactor. Requires thiamine diphosphate as cofactor.

The enzyme catalyses D-glyceraldehyde 3-phosphate + pyruvate + H(+) = 1-deoxy-D-xylulose 5-phosphate + CO2. The protein operates within metabolic intermediate biosynthesis; 1-deoxy-D-xylulose 5-phosphate biosynthesis; 1-deoxy-D-xylulose 5-phosphate from D-glyceraldehyde 3-phosphate and pyruvate: step 1/1. Catalyzes the acyloin condensation reaction between C atoms 2 and 3 of pyruvate and glyceraldehyde 3-phosphate to yield 1-deoxy-D-xylulose-5-phosphate (DXP). This chain is 1-deoxy-D-xylulose-5-phosphate synthase, found in Magnetococcus marinus (strain ATCC BAA-1437 / JCM 17883 / MC-1).